The primary structure comprises 149 residues: MKITIEELPELRIAYFRNVGEYGGKQNKELMESFKKWAQLNGVFHNSVILGIPQDDPSITPKEECRYDVGVVLNEDFNVLQPAQVGKLPGGKYAVFLLDHTKEAVSEFWGNIFSEIEKNSLTMRGEPIIERYTSQMIDNHLCEVLVPIQ.

In Bacillus subtilis (strain 168), this protein is SPbeta prophage-derived putative transcriptional regulator YosT (yosT).